The chain runs to 253 residues: Phosphoadenosine 5'-phosphosulfate reductase (253 aa).

The active-site Nucleophile; cysteine thiosulfonate intermediate is the Cys239.

It belongs to the PAPS reductase family. CysH subfamily.

Its subcellular location is the cytoplasm. The enzyme catalyses [thioredoxin]-disulfide + sulfite + adenosine 3',5'-bisphosphate + 2 H(+) = [thioredoxin]-dithiol + 3'-phosphoadenylyl sulfate. It functions in the pathway sulfur metabolism; hydrogen sulfide biosynthesis; sulfite from sulfate: step 3/3. Functionally, catalyzes the formation of sulfite from phosphoadenosine 5'-phosphosulfate (PAPS) using thioredoxin as an electron donor. The polypeptide is Phosphoadenosine 5'-phosphosulfate reductase (Aliivibrio salmonicida (strain LFI1238) (Vibrio salmonicida (strain LFI1238))).